A 261-amino-acid polypeptide reads, in one-letter code: uncharacterized protein (261 aa).

5 helical membrane-spanning segments follow: residues 38 to 58 (FIYLILGGFGFYQPSNLITLL), 134 to 154 (YTLMVSLVAIFQCLISLLALI), 163 to 183 (ILINLSLTLNFFLLLFNTYVL), 195 to 215 (YMGLIVSYIISLLDFSALFFL), and 219 to 239 (HKSVLSVISSIFSFFLMCLKV).

It localises to the membrane. This is an uncharacterized protein from Dictyostelium discoideum (Social amoeba).